The following is a 462-amino-acid chain: Probable serine/threonine-protein kinase DDB_G0286841 (462 aa).

Residues 64–358 form the Protein kinase domain; it reads FNFLKVISKG…VDEVKCHPFF (295 aa). ATP-binding positions include 70–78 and lysine 93; that span reads ISKGGFGKV. Aspartate 188 functions as the Proton acceptor in the catalytic mechanism. The AGC-kinase C-terminal domain occupies 359-462; sequence SEINWKIYED…LFIDFDFPTY (104 aa). The segment covering 414–439 has biased composition (low complexity); the sequence is NIYKNNNNNNNNNNNNNNNNNNNNNN. Positions 414-447 are disordered; the sequence is NIYKNNNNNNNNNNNNNNNNNNNNNNDDNDDENN.

This sequence belongs to the protein kinase superfamily. AGC Ser/Thr protein kinase family.

It catalyses the reaction L-seryl-[protein] + ATP = O-phospho-L-seryl-[protein] + ADP + H(+). The catalysed reaction is L-threonyl-[protein] + ATP = O-phospho-L-threonyl-[protein] + ADP + H(+). This chain is Probable serine/threonine-protein kinase DDB_G0286841, found in Dictyostelium discoideum (Social amoeba).